A 364-amino-acid polypeptide reads, in one-letter code: Alanine racemase (364 aa).

Catalysis depends on Lys35, which acts as the Proton acceptor; specific for D-alanine. Position 35 is an N6-(pyridoxal phosphate)lysine (Lys35). Residue Arg131 coordinates substrate. Tyr256 acts as the Proton acceptor; specific for L-alanine in catalysis. Met304 contributes to the substrate binding site.

It belongs to the alanine racemase family. The cofactor is pyridoxal 5'-phosphate.

It catalyses the reaction L-alanine = D-alanine. Its pathway is amino-acid biosynthesis; D-alanine biosynthesis; D-alanine from L-alanine: step 1/1. In terms of biological role, catalyzes the interconversion of L-alanine and D-alanine. May also act on other amino acids. This chain is Alanine racemase (alr), found in Halorhodospira halophila (strain DSM 244 / SL1) (Ectothiorhodospira halophila (strain DSM 244 / SL1)).